The primary structure comprises 1400 residues: DNA-directed RNA polymerase subunit beta' (1400 aa).

Zn(2+) contacts are provided by cysteine 71, cysteine 73, cysteine 86, and cysteine 89. Residues aspartate 462, aspartate 464, and aspartate 466 each contribute to the Mg(2+) site. Zn(2+) contacts are provided by cysteine 811, cysteine 885, cysteine 892, and cysteine 895.

This sequence belongs to the RNA polymerase beta' chain family. As to quaternary structure, the RNAP catalytic core consists of 2 alpha, 1 beta, 1 beta' and 1 omega subunit. When a sigma factor is associated with the core the holoenzyme is formed, which can initiate transcription. It depends on Mg(2+) as a cofactor. Zn(2+) serves as cofactor.

The catalysed reaction is RNA(n) + a ribonucleoside 5'-triphosphate = RNA(n+1) + diphosphate. In terms of biological role, DNA-dependent RNA polymerase catalyzes the transcription of DNA into RNA using the four ribonucleoside triphosphates as substrates. The chain is DNA-directed RNA polymerase subunit beta' from Brucella ovis (strain ATCC 25840 / 63/290 / NCTC 10512).